Consider the following 494-residue polypeptide: Succinoglycan biosynthesis transport protein ExoT (494 aa).

Helical transmembrane passes span 16-36, 44-64, 82-102, 105-125, 157-177, 215-235, 253-273, 297-317, 321-341, 343-363, 384-404, 421-441, and 447-467; these read WSVLSKTGTFGLKFVTVPILA, FGAVAVALTVVQFLAMIGGAG, SVFWANLAIALMMALGLFVFA, LATLLGAPEAAYLLRIMSLLI, LGAVIAVLLALLGFGIWSLLA, FGMMGSEIANFITFQSPMVVI, FASIPNQVVLSAVMGVLFPTF, LLAPMMFGLWALAEPAMLVLF, WAYAWPVLGLLALSKGILTPC, TFIPYLKGVGQGAVLFWWALI, AMIWLCIVNAVTLVGYSWVVF, PMIAALLMALVVRFLLEHFGA, and VLQLIAGTAIGSVIYTVLILL.

This sequence belongs to the polysaccharide synthase family.

The protein localises to the cell membrane. It functions in the pathway glycan metabolism; exopolysaccharide biosynthesis. The chain is Succinoglycan biosynthesis transport protein ExoT (exoT) from Rhizobium meliloti (strain 1021) (Ensifer meliloti).